We begin with the raw amino-acid sequence, 463 residues long: Glycine--tRNA ligase (463 aa).

2 residues coordinate substrate: Arg98 and Glu170. ATP contacts are provided by residues 202 to 204, 212 to 217, 287 to 288, and 331 to 334; these read RNE, FRTREF, EL, and GIER. 217–221 contributes to the substrate binding site; that stretch reads FEQFE. 327-331 contacts substrate; that stretch reads EPSLG.

It belongs to the class-II aminoacyl-tRNA synthetase family. Homodimer.

The protein resides in the cytoplasm. It catalyses the reaction tRNA(Gly) + glycine + ATP = glycyl-tRNA(Gly) + AMP + diphosphate. Catalyzes the attachment of glycine to tRNA(Gly). The polypeptide is Glycine--tRNA ligase (Mycoplasmoides gallisepticum (strain R(low / passage 15 / clone 2)) (Mycoplasma gallisepticum)).